Here is a 254-residue protein sequence, read N- to C-terminus: Alcohol dehydrogenase (254 aa).

Residue 10-33 coordinates NAD(+); sequence FVAGLGGIGLDTSRELVKRNLKNL. Ser138 contributes to the substrate binding site. The active-site Proton acceptor is Tyr151.

This sequence belongs to the short-chain dehydrogenases/reductases (SDR) family. Homodimer.

It catalyses the reaction a primary alcohol + NAD(+) = an aldehyde + NADH + H(+). The enzyme catalyses a secondary alcohol + NAD(+) = a ketone + NADH + H(+). The protein is Alcohol dehydrogenase (Adh) of Drosophila persimilis (Fruit fly).